We begin with the raw amino-acid sequence, 270 residues long: uncharacterized protein (270 aa).

The HTH lysR-type domain maps to 1-50 (LTEVVKAQSFTKAAENLYTSQPSISRDIKRLENDYDVKVFEFKHSKMTLT). A DNA-binding region (H-T-H motif) is located at residues 10-29 (FTKAAENLYTSQPSISRDIK).

The protein belongs to the LysR transcriptional regulatory family.

This is an uncharacterized protein from Staphylococcus xylosus.